The chain runs to 205 residues: Small ribosomal subunit protein uS4 (205 aa).

The span at 1–16 (MSKRESSKYKIDRRMG) shows a compositional bias: basic and acidic residues. Residues 1-46 (MSKRESSKYKIDRRMGENIWGRPKSPVNRREYGPGQHGQRRKSKLS) are disordered. An S4 RNA-binding domain is found at 94–157 (SRLDAIVYRA…KQLVTVLEAV (64 aa)).

The protein belongs to the universal ribosomal protein uS4 family. As to quaternary structure, part of the 30S ribosomal subunit. Contacts protein S5. The interaction surface between S4 and S5 is involved in control of translational fidelity.

Its function is as follows. One of the primary rRNA binding proteins, it binds directly to 16S rRNA where it nucleates assembly of the body of the 30S subunit. Functionally, with S5 and S12 plays an important role in translational accuracy. This is Small ribosomal subunit protein uS4 from Rhizobium meliloti (strain 1021) (Ensifer meliloti).